The chain runs to 118 residues: Small ribosomal subunit protein uS13 (118 aa).

The segment at 94–118 (SLPLRGQRTKTNARTRKGPRKPIRK) is disordered.

This sequence belongs to the universal ribosomal protein uS13 family. As to quaternary structure, part of the 30S ribosomal subunit. Forms a loose heterodimer with protein S19. Forms two bridges to the 50S subunit in the 70S ribosome.

In terms of biological role, located at the top of the head of the 30S subunit, it contacts several helices of the 16S rRNA. In the 70S ribosome it contacts the 23S rRNA (bridge B1a) and protein L5 of the 50S subunit (bridge B1b), connecting the 2 subunits; these bridges are implicated in subunit movement. Contacts the tRNAs in the A and P-sites. This Shewanella denitrificans (strain OS217 / ATCC BAA-1090 / DSM 15013) protein is Small ribosomal subunit protein uS13.